A 969-amino-acid polypeptide reads, in one-letter code: Leucine--tRNA ligase (969 aa).

Positions 78-89 (PYPSGEGLHVGH) match the 'HIGH' region motif. The 'KMSKS' region signature appears at 739–743 (KIGKS). Lys-742 contacts ATP.

The protein belongs to the class-I aminoacyl-tRNA synthetase family.

Its subcellular location is the cytoplasm. The enzyme catalyses tRNA(Leu) + L-leucine + ATP = L-leucyl-tRNA(Leu) + AMP + diphosphate. This Mycobacterium tuberculosis (strain ATCC 25177 / H37Ra) protein is Leucine--tRNA ligase.